Consider the following 173-residue polypeptide: Calcium-binding protein 5 (173 aa).

EF-hand domains are found at residues 28–63, 82–99, 105–140, and 142–173; these read DEIE…MGYM, GRVD…KLLA, IGVQ…LLGE, and LTPR…MMSR. Asp41, Asp43, Asp45, and Asp52 together coordinate Ca(2+). Ca(2+) contacts are provided by Asp118, Asn120, Asp122, Glu124, Glu129, Asp155, Asn157, Asp159, Thr161, and Glu166.

In terms of assembly, interacts with CACNA1C (via C-terminal CDB motif) in a calcium-dependent manner. Interacts with STXBP1. Interacts with MYO6. Retina.

It localises to the cytoplasm. In terms of biological role, inhibits calcium-dependent inactivation of L-type calcium channel and shifts voltage dependence of activation to more depolarized membrane potentials. Involved in the transmission of light signals. May positively regulate neurotransmitter vesicle endocytosis and exocytosis in a salt-dependent manner. May play a role in the extension and network organization of neurites. The sequence is that of Calcium-binding protein 5 (CABP5) from Homo sapiens (Human).